A 703-amino-acid polypeptide reads, in one-letter code: uncharacterized protein (703 aa).

Transmembrane regions (helical) follow at residues 23 to 43 (IAMSGAISAGAYSAGVFDFLI), 69 to 89 (ALSGASAGAITAAIGVIAAGG), 143 to 163 (PVISVLNANVLTAIGAEALEA), and 250 to 270 (PPEWLAFANAALASGAFPIGL). A PNPLA domain is found at 23–335 (IAMSGAISAG…INNDPFEFVR (313 aa)). Residues 72–76 (GASAG) carry the GXSXG motif. Serine 74 acts as the Nucleophile in catalysis. Residue aspartate 322 is the Proton acceptor of the active site. Residues 322-324 (DGG) carry the DGA/G motif. 3 consecutive transmembrane segments (helical) span residues 357–377 (VIMIAPFPEGPPFLGDGEPPL), 432–452 (ETFSIASGLLGGFGGFVLEAF), and 644–664 (ILSTLAGAAGANCQVWLAPWT).

It is found in the cell membrane. This is an uncharacterized protein from Sinorhizobium fredii (strain NBRC 101917 / NGR234).